The primary structure comprises 342 residues: Platelet-activating factor receptor (342 aa).

Topologically, residues 1–16 (MEPNNSFRVDSEFRYT) are extracellular. Asparagine 4 carries an N-linked (GlcNAc...) asparagine glycan. A helical transmembrane segment spans residues 17–38 (LFPIFYSIVFVLGVIANSYVLW). At 39-54 (VFARLYPSKKFNEIKI) the chain is on the cytoplasmic side. Residues 55–74 (FMVNLTMADLLFLVTLPLWI) form a helical membrane-spanning segment. Residues 75–91 (VYYYNQGDWILPKFLCN) are Extracellular-facing. Cysteine 90 and cysteine 173 form a disulfide bridge. The helical transmembrane segment at 92–113 (LAGCFFFINTYCSVAFLAVITY) threads the bilayer. At 114–133 (NRFQAVTRPIKTAQATTRKR) the chain is on the cytoplasmic side. Residues 134–155 (GFLLSLIIWVSIVGAASYFFVL) traverse the membrane as a helical segment. Over 156–184 (DSTNSEPKKTGSGNITRCFEHYEKGSIPV) the chain is Extracellular. Asparagine 169 carries N-linked (GlcNAc...) asparagine glycosylation. A helical membrane pass occupies residues 185-205 (LIIHIFLVFSFFLVFLIILFC). The Cytoplasmic portion of the chain corresponds to 206 to 233 (NLVIIRTLLTQQVQMQRNAEVKRRALWM). A helical membrane pass occupies residues 234-254 (VCTVLAVFVICFVPHHLVQLP). The Extracellular segment spans residues 255–276 (WTLAELGFQDTDFHQGINDAHQ). The helical transmembrane segment at 277 to 296 (VTLCLLSTNCVLDPIIYCFL) threads the bilayer. Over 297-342 (TKKFRKHLTEKLYSMRESRKCSRATSETGTEVVVQLKDAPIKSLKY) the chain is Cytoplasmic.

It belongs to the G-protein coupled receptor 1 family. In terms of assembly, interacts with ARRB1.

It is found in the cell membrane. Functionally, receptor for platelet activating factor, a chemotactic phospholipid mediator that possesses potent inflammatory, smooth-muscle contractile and hypotensive activity. Seems to mediate its action via a G protein that activates a phosphatidylinositol-calcium second messenger system. This Capra hircus (Goat) protein is Platelet-activating factor receptor.